Consider the following 807-residue polypeptide: Ribosomal RNA large subunit methyltransferase K/L (807 aa).

A THUMP domain is found at 67–182; sequence QIYKICLWSR…EKQAEIFLDL (116 aa). Polar residues predominate over residues 548 to 560; the sequence is NTQYGNPEASAQS. The tract at residues 548-602 is disordered; it reads NTQYGNPEASAQSKESKNAPEPKKDNRNRYKGNKFQQAREEAKRQEAQRLAQKKR. Composition is skewed to basic and acidic residues over residues 561 to 575 and 584 to 594; these read KESK…DNRN and QAREEAKRQEA.

It belongs to the methyltransferase superfamily. RlmKL family.

The protein resides in the cytoplasm. It carries out the reaction guanosine(2445) in 23S rRNA + S-adenosyl-L-methionine = N(2)-methylguanosine(2445) in 23S rRNA + S-adenosyl-L-homocysteine + H(+). The enzyme catalyses guanosine(2069) in 23S rRNA + S-adenosyl-L-methionine = N(2)-methylguanosine(2069) in 23S rRNA + S-adenosyl-L-homocysteine + H(+). Functionally, specifically methylates the guanine in position 2445 (m2G2445) and the guanine in position 2069 (m7G2069) of 23S rRNA. This Psychrobacter sp. (strain PRwf-1) protein is Ribosomal RNA large subunit methyltransferase K/L.